Consider the following 198-residue polypeptide: Recombination protein RecR (198 aa).

A C4-type zinc finger spans residues 57–72; the sequence is CAMCNTFTESAVCETC. Residues 80 to 175 form the Toprim domain; the sequence is ALLCVVETPG…KVSRLARGVP (96 aa).

It belongs to the RecR family.

Its function is as follows. May play a role in DNA repair. It seems to be involved in an RecBC-independent recombinational process of DNA repair. It may act with RecF and RecO. This is Recombination protein RecR from Herminiimonas arsenicoxydans.